A 127-amino-acid polypeptide reads, in one-letter code: Modulator protein MzrA (127 aa).

Over 1–10 the chain is Cytoplasmic; it reads MQIPRMSLRQ. The helical transmembrane segment at 11–31 threads the bilayer; sequence LAWSGAVLLLVGTLLLAWSAV. At 32-127 the chain is on the periplasmic side; sequence RQQESTLAIR…RLRDNSHRFG (96 aa).

Belongs to the MzrA family. Interacts with EnvZ.

The protein localises to the cell inner membrane. Modulates the activity of the EnvZ/OmpR two-component regulatory system, probably by directly modulating EnvZ enzymatic activity and increasing stability of phosphorylated OmpR. Links the two-component systems CpxA/CpxR and EnvZ/OmpR. The polypeptide is Modulator protein MzrA (Escherichia coli (strain K12)).